Consider the following 304-residue polypeptide: Protease HtpX homolog (304 aa).

2 helical membrane passes run 14-34 (IFII…IGII) and 39-59 (YLNG…IMVM). Residue histidine 144 participates in Zn(2+) binding. Residue glutamate 145 is part of the active site. Residue histidine 148 participates in Zn(2+) binding. The next 2 membrane-spanning stretches (helical) occupy residues 159–179 (IAIA…RMIF) and 202–222 (AIIY…ATAI). Glutamate 231 lines the Zn(2+) pocket.

It belongs to the peptidase M48B family. Requires Zn(2+) as cofactor.

The protein localises to the cell membrane. This chain is Protease HtpX homolog, found in Listeria monocytogenes serovar 1/2a (strain ATCC BAA-679 / EGD-e).